The sequence spans 429 residues: Glycine betaine monooxygenase oxygenase subunit (429 aa).

The region spanning 56 to 163 (WLIAGMTCEI…VKTAGGYIFI (108 aa)) is the Rieske domain. Positions 98, 100, 118, and 121 each coordinate [2Fe-2S] cluster. Residues histidine 217 and histidine 222 each coordinate Fe cation.

Belongs to the bacterial ring-hydroxylating dioxygenase alpha subunit family. As to quaternary structure, the system is composed of an oxygenase subunit (GbcA) and a reductase subunit (GbcB). The cofactor is [2Fe-2S] cluster. Fe cation is required as a cofactor.

The enzyme catalyses glycine betaine + NADH + O2 + H(+) = N,N-dimethylglycine + formaldehyde + NAD(+) + H2O. Involved in degradation of glycine betaine. Part of a Rieske-type oxygenase system that catalyzes the conversion of glycine betaine (GB) to dimethylglycine (DMG). This subunit is the terminal oxygenase component of the system. The protein is Glycine betaine monooxygenase oxygenase subunit of Pseudomonas aeruginosa (strain UCBPP-PA14).